A 486-amino-acid polypeptide reads, in one-letter code: Iron-sulfur cluster assembly SufBD family protein ycf24 (486 aa).

Belongs to the iron-sulfur cluster assembly SufBD family.

It localises to the plastid. It is found in the chloroplast. The chain is Iron-sulfur cluster assembly SufBD family protein ycf24 (ycf24) from Trieres chinensis (Marine centric diatom).